The following is a 542-amino-acid chain: CTP synthase (542 aa).

The tract at residues 1–265 (MARYVFITGG…DSEVLSAFGI (265 aa)) is amidoligase domain. CTP is bound at residue Ser-13. Ser-13 provides a ligand contact to UTP. 14 to 19 (SLGKGI) contributes to the ATP binding site. Tyr-54 is an L-glutamine binding site. Position 71 (Asp-71) interacts with ATP. Mg(2+) is bound by residues Asp-71 and Glu-139. CTP is bound by residues 146-148 (DIE), 186-191 (KTKPTQ), and Lys-222. Residues 186-191 (KTKPTQ) and Lys-222 contribute to the UTP site. Residues 291–541 (TIAVVGKYTG…IEAAIEQSRL (251 aa)) form the Glutamine amidotransferase type-1 domain. Residue Gly-353 participates in L-glutamine binding. Cys-380 (nucleophile; for glutamine hydrolysis) is an active-site residue. L-glutamine is bound by residues 381 to 384 (FGMQ), Glu-404, and Arg-469. Residues His-514 and Glu-516 contribute to the active site.

This sequence belongs to the CTP synthase family. Homotetramer.

It carries out the reaction UTP + L-glutamine + ATP + H2O = CTP + L-glutamate + ADP + phosphate + 2 H(+). The enzyme catalyses L-glutamine + H2O = L-glutamate + NH4(+). The catalysed reaction is UTP + NH4(+) + ATP = CTP + ADP + phosphate + 2 H(+). Its pathway is pyrimidine metabolism; CTP biosynthesis via de novo pathway; CTP from UDP: step 2/2. Allosterically activated by GTP, when glutamine is the substrate; GTP has no effect on the reaction when ammonia is the substrate. The allosteric effector GTP functions by stabilizing the protein conformation that binds the tetrahedral intermediate(s) formed during glutamine hydrolysis. Inhibited by the product CTP, via allosteric rather than competitive inhibition. Functionally, catalyzes the ATP-dependent amination of UTP to CTP with either L-glutamine or ammonia as the source of nitrogen. Regulates intracellular CTP levels through interactions with the four ribonucleotide triphosphates. The polypeptide is CTP synthase (Brucella abortus (strain 2308)).